The chain runs to 137 residues: uncharacterized protein (137 aa).

3 helical membrane-spanning segments follow: residues 5-25 (ELLWPALITALATMLYLVLVI), 79-99 (IAAILGAVWLLGRILYAWGYY), and 109-129 (FALGSLSSMILVVGALLSILW).

The protein belongs to the MAPEG family.

It localises to the cell membrane. This is an uncharacterized protein from Synechocystis sp. (strain ATCC 27184 / PCC 6803 / Kazusa).